The sequence spans 1136 residues: 3-O-alpha-D-galactosyl-alpha-L-arabinofuranosidase (1136 aa).

The N-terminal stretch at 1–36 (MGISRNRLVPGLVGLAASAAIVLPLGIGMPVSSATA) is a signal peptide. The active-site Proton donor is the Glu-194. Glu-321 serves as the catalytic Nucleophile. 2 consecutive CBM6 domains span residues 521-656 (QAIE…LLLY) and 669-779 (VTYP…VTTA). A BIG2 domain is found at 987–1045 (KASLKVGETLSLNASVTPDSVADKTVQWTSSDEQVATVDEHGVVKGVKAGTVTITATSV). Residues 1049-1104 (SRSGSVEVTVAEDSEQKPSGGDGDNNGEQTGKPDGNTGGQTSDSDAGADSGNNQKH) are disordered. Over residues 1087–1103 (GQTSDSDAGADSGNNQK) the composition is skewed to polar residues. Residues 1109–1129 (GAAVAAVAGVAVLLAGAGLLL) form a helical membrane-spanning segment.

The protein belongs to the glycosyl hydrolase 39 family.

The protein resides in the cell membrane. It localises to the secreted. It is found in the cell wall. It carries out the reaction Hydrolysis of alpha-D-Galp-(1-&gt;3)-L-Araf disaccharides from non-reducing terminals in branches of type II arabinogalactan attached to proteins.. In terms of biological role, hydrolase involved in the degradation of the gum arabic arabinogalactan protein (AGP). Catalyzes the release of 3-O-alpha-D-galactopyranosyl-L-arabinose (alpha-D-Galp-(1-&gt;3)-L-Ara) from gum arabic AGP. Can also release 3-O-beta-L-arabinopyranosyl-L-arabinose (beta-L-Arap-(1-&gt;3)-L-Ara) from gum arabic AGP and larch AGP, but the alpha-D-Galp-(1-&gt;3)-L-Ara release activity is 594-fold higher than the beta-L-Arap-(1-&gt;3)-L-Ara release activity. Exhibits no reactivity toward p-nitrophenyl (pNP)-alpha-Araf or any other tested pNP substrate. Plays a crucial role in gum arabic AGP assimilation in B.longum. The sequence is that of 3-O-alpha-D-galactosyl-alpha-L-arabinofuranosidase from Bifidobacterium longum subsp. longum.